The sequence spans 49 residues: Large ribosomal subunit protein bL33 (49 aa).

It belongs to the bacterial ribosomal protein bL33 family.

This chain is Large ribosomal subunit protein bL33, found in Alkaliphilus metalliredigens (strain QYMF).